Here is a 297-residue protein sequence, read N- to C-terminus: MVSIKVSLADFIVKTDEGWIPSDNCPALDRFKTKTEKELLDSIKREGADRASIRKQLFLTPISNKRLTQIGGVPVRDIRTSTTIPSSTRNLITDWLLNIFNDEESGEEVENAIASKYPDIFCSADKISRVAQRLENRRDRVHEDGFRILSATMLAIDSDIATEGKCEIVRATEDAIIAKFEPVSEHLCIGNPRGVFYKAFPIKKEQPMVYGIKALLGISNRDFIMNHGHGHLRTVPYSEINNAIRSFAKKNEAEIKRIRSDSLSPNAGEKFINMCDMLLQKEKIETIIAKIMKNDKN.

ATP-binding positions include 119-121 (DIF), lysine 198, and 227-229 (HGH). Positions 212–247 (IKALLGISNRDFIMNHGHGHLRTVPYSEINNAIRSF) are RNA-binding. Residue histidine 231 is the For NTPase and RTPase activities of the active site. Arginine 233 contacts ATP.

Belongs to the rotavirus NSP2 family. In terms of assembly, homooctamer. Interacts with VP1; this interaction is weak. Interacts with NSP5; this interaction leads to up-regulation of NSP5 phosphorylation and formation of viral factories. Mg(2+) is required as a cofactor.

Its subcellular location is the host cytoplasm. Functionally, participates in replication and packaging of the viral genome. Plays a crucial role, together with NSP5, in the formation of virus factories (viroplasms) which are large inclusions in the host cytoplasm where replication intermediates are assembled and viral RNA replication takes place. Displays ssRNA binding, NTPase, RNA triphosphatase (RTPase) and ATP-independent helix-unwinding activities. The unwinding activity may prepare and organize plus-strand RNAs for packaging and replication by removing interfering secondary structures. The RTPase activity plays a role in the removal of the gamma-phosphate from the rotavirus RNA minus strands of dsRNA genome segments. The chain is Non-structural protein 2 from Homo sapiens (Human).